A 187-amino-acid chain; its full sequence is Interferon beta (187 aa).

The first 21 residues, 1–21, serve as a signal peptide directing secretion; sequence MTNKCLLQIALLLCFSTTALS. Tyr24 is modified (phosphotyrosine). Cysteines 52 and 162 form a disulfide. An N-linked (GlcNAc...) asparagine glycan is attached at Asn101.

The protein belongs to the alpha/beta interferon family. As to quaternary structure, monomer.

Its subcellular location is the secreted. Type I interferon cytokine that plays a key role in the innate immune response to infection, developing tumors and other inflammatory stimuli. Signals via binding to high-affinity (IFNAR2) and low-affinity (IFNAR1) heterodimeric receptor, activating the canonical Jak-STAT signaling pathway resulting in transcriptional activation or repression of interferon-regulated genes that encode the effectors of the interferon response, such as antiviral proteins, regulators of cell proliferation and differentiation, and immunoregulatory proteins. Signals mostly via binding to a IFNAR1-IFNAR2 heterodimeric receptor, but can also function with IFNAR1 alone and independently of Jak-STAT pathways. Elicits a wide variety of responses, including antiviral and antibacterial activities, and can regulate the development of B-cells, myelopoiesis and lipopolysaccharide (LPS)-inducible production of tumor necrosis factor. Plays a role in neuronal homeostasis by regulating dopamine turnover and protecting dopaminergic neurons: acts by promoting neuronal autophagy and alpha-synuclein clearance, thereby preventing dopaminergic neuron loss. IFNB1 is more potent than interferon-alpha (IFN-alpha) in inducing the apoptotic and antiproliferative pathways required for control of tumor cell growth. The chain is Interferon beta from Homo sapiens (Human).